The following is a 539-amino-acid chain: Glucose-6-phosphate isomerase (539 aa).

Glu-353 functions as the Proton donor in the catalytic mechanism. Residues His-384 and Lys-505 contribute to the active site.

Belongs to the GPI family.

Its subcellular location is the cytoplasm. The catalysed reaction is alpha-D-glucose 6-phosphate = beta-D-fructose 6-phosphate. It functions in the pathway carbohydrate biosynthesis; gluconeogenesis. Its pathway is carbohydrate degradation; glycolysis; D-glyceraldehyde 3-phosphate and glycerone phosphate from D-glucose: step 2/4. In terms of biological role, catalyzes the reversible isomerization of glucose-6-phosphate to fructose-6-phosphate. This is Glucose-6-phosphate isomerase from Ralstonia nicotianae (strain ATCC BAA-1114 / GMI1000) (Ralstonia solanacearum).